The following is a 114-amino-acid chain: Vacuolar ATPase assembly integral membrane protein VMA21 (114 aa).

Residues 1–39 (MATRRIISQEKTLLEKDDSIGSSPAADEKSNIAPAVPTS) are Cytoplasmic-facing. Residues 40–60 (VIMKLLAFTLGMIVIPIGSYF) form a helical membrane-spanning segment. Residues 61–73 (ATVDSVFNGNSTY) are Lumenal-facing. A helical transmembrane segment spans residues 74–94 (AGALAAIMANVVLIGYIFVAM). The Cytoplasmic segment spans residues 95–114 (AEDQSDQQEGGGPGDGKKDR). The Prevents secretion from ER signature appears at 111–114 (KKDR).

It belongs to the VMA21 family.

The protein resides in the endoplasmic reticulum membrane. It localises to the endoplasmic reticulum-Golgi intermediate compartment membrane. It is found in the cytoplasmic vesicle. Its subcellular location is the COPII-coated vesicle membrane. Its function is as follows. Required for the assembly of the V0 complex of the vacuolar ATPase (V-ATPase) in the endoplasmic reticulum. In Chaetomium globosum (strain ATCC 6205 / CBS 148.51 / DSM 1962 / NBRC 6347 / NRRL 1970) (Soil fungus), this protein is Vacuolar ATPase assembly integral membrane protein VMA21.